The chain runs to 682 residues: Zinc finger protein 16 (682 aa).

Over residues 1–10 (MPSLRTRREE) the composition is skewed to basic and acidic residues. The interval 1-43 (MPSLRTRREEAEMELSVPGPSPWTPAAQARVRDAPAVTHPGSA) is disordered. The segment at 62-210 (YQQPDCDTRT…GVPTAESPLI (149 aa)) is necessary for transcription activation. A C2H2-type 1; degenerate zinc finger spans residues 209–231 (LICNECGKTFQGNPDLIQRQIVH). The segment at 237–259 (FMCDDCGKTFSQNSVLKNRHRSH) adopts a C2H2-type 2; degenerate zinc-finger fold. A Glycyl lysine isopeptide (Lys-Gly) (interchain with G-Cter in SUMO2) cross-link involves residue Lys253. C2H2-type zinc fingers lie at residues 265-287 (YQCSECGKAFRGHSDFSRHQSHH), 293-315 (YMCNECGKAFSQNSSLKKHQKSH), 321-343 (YECNECGKAFRRSSNLIQHQRIH), 349-371 (YVCSECGKAFRRSSNLIKHHRTH), 377-399 (FECGECGKAFSQSAHLRKHQRVH), 405-427 (YECNDCGKPFSRVSNLIKHHRVH), 433-455 (YKCSDCGKAFSQSSSLIQHRRIH), and 461-483 (HVCNVCGKAFSYSSVLRKHQIIH). Required for nuclear localization regions lie at residues 268–393 (SECG…AHLR) and 341–373 (RIHSGEKPYVCSECGKAFRRSSNLIKHHRTHTG). Residues 473–503 (SSVLRKHQIIHTGEKPYRCSVCGKAFSHSSA) form a required for nuclear localization region. Lys487 is modified (N6-acetyllysine). 7 C2H2-type zinc fingers span residues 489–511 (YRCSVCGKAFSHSSALIQHQGVH), 517–539 (YACHECGKTFGRSSNLILHQRVH), 545–567 (YECTECGKTFSQSSTLIQHQRIH), 573–595 (HECNQCGKAFNRSSNLIHHQKVH), 601–623 (YTCVECGKGFSQSSHLIQHQIIH), 629–651 (YKCSECGKAFSQRSVLIQHQRIH), and 657–679 (YDCAACGKAFSQRSKLIKHQLIH).

It belongs to the krueppel C2H2-type zinc-finger protein family. In terms of assembly, interacts with INCA1; the interaction inhibits INCA1 activity and induces the cell cycle process. As to expression, ubiquitous.

The protein localises to the nucleus. Acts as a transcriptional activator. Promotes cell proliferation by facilitating the cell cycle phase transition from the S to G2/M phase. Involved in both the hemin- and phorbol myristate acetate (PMA)-induced erythroid and megakaryocytic differentiation, respectively. Also plays a role as an inhibitor of cell apoptosis. The polypeptide is Zinc finger protein 16 (ZNF16) (Homo sapiens (Human)).